The primary structure comprises 392 residues: Phosphoglycerate kinase (392 aa).

Substrate is bound by residues 21 to 23 (DMN), Arg36, 59 to 62 (HLGR), Arg114, and Arg147. ATP-binding positions include Lys198, Glu320, and 346–349 (GGDT).

Belongs to the phosphoglycerate kinase family. In terms of assembly, monomer.

The protein localises to the cytoplasm. It catalyses the reaction (2R)-3-phosphoglycerate + ATP = (2R)-3-phospho-glyceroyl phosphate + ADP. It participates in carbohydrate degradation; glycolysis; pyruvate from D-glyceraldehyde 3-phosphate: step 2/5. This chain is Phosphoglycerate kinase (pgk), found in Neisseria meningitidis serogroup B (strain ATCC BAA-335 / MC58).